The chain runs to 202 residues: Small ribosomal subunit protein uS4 (202 aa).

Positions 22-43 (TRKSARRAYPPGQHGQNRKKRS) are disordered. The S4 RNA-binding domain occupies 90–152 (MRLDNTVFRL…AQSRKLVEAN (63 aa)).

This sequence belongs to the universal ribosomal protein uS4 family. Part of the 30S ribosomal subunit. Contacts protein S5. The interaction surface between S4 and S5 is involved in control of translational fidelity.

One of the primary rRNA binding proteins, it binds directly to 16S rRNA where it nucleates assembly of the body of the 30S subunit. In terms of biological role, with S5 and S12 plays an important role in translational accuracy. The chain is Small ribosomal subunit protein uS4 from Nostoc punctiforme (strain ATCC 29133 / PCC 73102).